The following is a 539-amino-acid chain: Chaperonin GroEL (539 aa).

ATP contacts are provided by residues threonine 29–proline 32, aspartate 86–threonine 90, glycine 413, asparagine 476–alanine 478, and aspartate 492.

The protein belongs to the chaperonin (HSP60) family. As to quaternary structure, forms a cylinder of 14 subunits composed of two heptameric rings stacked back-to-back. Interacts with the co-chaperonin GroES.

The protein resides in the cytoplasm. The catalysed reaction is ATP + H2O + a folded polypeptide = ADP + phosphate + an unfolded polypeptide.. Functionally, together with its co-chaperonin GroES, plays an essential role in assisting protein folding. The GroEL-GroES system forms a nano-cage that allows encapsulation of the non-native substrate proteins and provides a physical environment optimized to promote and accelerate protein folding. This Parageobacillus thermoglucosidasius (Geobacillus thermoglucosidasius) protein is Chaperonin GroEL.